Reading from the N-terminus, the 385-residue chain is Putative transport protein BpOF4_00890 (385 aa).

The next 8 helical transmembrane spans lie at 42-62, 63-83, 93-113, 191-211, 255-275, 276-296, 304-324, and 350-370; these read TIWI…ILPV, SLPL…VNAL, VAVM…GYYI, SIPG…LFML, IIIF…VALL, MAFI…VILA, IVGD…LLII, and LGLM…VIAF.

It belongs to the autoinducer-2 exporter (AI-2E) (TC 2.A.86) family.

Its subcellular location is the cell membrane. The sequence is that of Putative transport protein BpOF4_00890 from Alkalihalophilus pseudofirmus (strain ATCC BAA-2126 / JCM 17055 / OF4) (Bacillus pseudofirmus).